The sequence spans 394 residues: S-adenosylmethionine synthase (394 aa).

H18 is a binding site for ATP. D20 serves as a coordination point for Mg(2+). K(+) is bound at residue E46. Positions 59 and 104 each coordinate L-methionine. A flexible loop region spans residues 104–114 (QSPDIAQGVDA). ATP contacts are provided by residues 174–176 (DCK), 240–241 (KF), D249, 255–256 (RK), A272, and K276. D249 lines the L-methionine pocket. K280 is a binding site for L-methionine.

Belongs to the AdoMet synthase family. As to quaternary structure, homotetramer; dimer of dimers. Mg(2+) serves as cofactor. The cofactor is K(+).

It is found in the cytoplasm. It carries out the reaction L-methionine + ATP + H2O = S-adenosyl-L-methionine + phosphate + diphosphate. The protein operates within amino-acid biosynthesis; S-adenosyl-L-methionine biosynthesis; S-adenosyl-L-methionine from L-methionine: step 1/1. In terms of biological role, catalyzes the formation of S-adenosylmethionine (AdoMet) from methionine and ATP. The overall synthetic reaction is composed of two sequential steps, AdoMet formation and the subsequent tripolyphosphate hydrolysis which occurs prior to release of AdoMet from the enzyme. This Akkermansia muciniphila (strain ATCC BAA-835 / DSM 22959 / JCM 33894 / BCRC 81048 / CCUG 64013 / CIP 107961 / Muc) protein is S-adenosylmethionine synthase.